The primary structure comprises 67 residues: Large ribosomal subunit protein bL35 (67 aa).

Basic residues predominate over residues 1-32; that stretch reads MPKLKNHSGAKKRFAKTATGKYKRRKAGRKHL. The disordered stretch occupies residues 1–54; sequence MPKLKNHSGAKKRFAKTATGKYKRRKAGRKHLLTPQSGSRKREMRQTGIIKPES.

Belongs to the bacterial ribosomal protein bL35 family.

This chain is Large ribosomal subunit protein bL35, found in Elusimicrobium minutum (strain Pei191).